Here is a 430-residue protein sequence, read N- to C-terminus: N-acylneuraminate cytidylyltransferase A (430 aa).

Residues 1 to 29 are disordered; the sequence is MDAVNENGKRAMKDDSHGNSTSPKRRKSR. Basic and acidic residues predominate over residues 7–17; that stretch reads NGKRAMKDDSH. The Bipartite nuclear localization signal motif lies at 9–27; it reads KRAMKDDSHGNSTSPKRRK. Residues Arg38, Asn48, Arg97, Ser106, Ser108, and Gln129 each contribute to the substrate site. Arg187 is a catalytic residue.

Belongs to the CMP-NeuNAc synthase family. As to quaternary structure, homotetramer.

It localises to the nucleus. The enzyme catalyses an N-acylneuraminate + CTP = a CMP-N-acyl-beta-neuraminate + diphosphate. It functions in the pathway amino-sugar metabolism; N-acetylneuraminate metabolism. Catalyzes the activation of N-acetylneuraminic acid (NeuNAc) to cytidine 5'-monophosphate N-acetylneuraminic acid (CMP-NeuNAc), a substrate required for the addition of sialic acid. Also has activity towards N-glycolylneuraminic acid (Neu5Gc). Has weak activity towards 2-keto-3-deoxy-D-glycero-D-galacto-nononic acid (KDN). The polypeptide is N-acylneuraminate cytidylyltransferase A (Danio rerio (Zebrafish)).